Here is a 753-residue protein sequence, read N- to C-terminus: 5-methyltetrahydropteroyltriglutamate--homocysteine methyltransferase (753 aa).

5-methyltetrahydropteroyltri-L-glutamate contacts are provided by residues 17 to 20 and Lys117; that span reads RELK. L-homocysteine-binding positions include 431 to 433 and Glu484; that span reads IGS. L-methionine contacts are provided by residues 431-433 and Glu484; that span reads IGS. Residues 515-516 and Trp561 contribute to the 5-methyltetrahydropteroyltri-L-glutamate site; that span reads RC. Asp599 serves as a coordination point for L-homocysteine. Residue Asp599 coordinates L-methionine. Glu605 serves as a coordination point for 5-methyltetrahydropteroyltri-L-glutamate. Residues His641, Cys643, and Glu665 each contribute to the Zn(2+) site. His694 functions as the Proton donor in the catalytic mechanism. Zn(2+) is bound at residue Cys726.

Belongs to the vitamin-B12 independent methionine synthase family. The cofactor is Zn(2+).

It catalyses the reaction 5-methyltetrahydropteroyltri-L-glutamate + L-homocysteine = tetrahydropteroyltri-L-glutamate + L-methionine. Its pathway is amino-acid biosynthesis; L-methionine biosynthesis via de novo pathway; L-methionine from L-homocysteine (MetE route): step 1/1. Functionally, catalyzes the transfer of a methyl group from 5-methyltetrahydrofolate to homocysteine resulting in methionine formation. The polypeptide is 5-methyltetrahydropteroyltriglutamate--homocysteine methyltransferase (Escherichia coli O157:H7).